Reading from the N-terminus, the 171-residue chain is UPF0398 protein M6_Spy1399 (171 aa).

The protein belongs to the UPF0398 family.

In Streptococcus pyogenes serotype M6 (strain ATCC BAA-946 / MGAS10394), this protein is UPF0398 protein M6_Spy1399.